Consider the following 149-residue polypeptide: Arginine repressor (149 aa).

Belongs to the ArgR family.

Its subcellular location is the cytoplasm. Its pathway is amino-acid biosynthesis; L-arginine biosynthesis [regulation]. In terms of biological role, regulates arginine biosynthesis genes. This is Arginine repressor from Chlorobium phaeobacteroides (strain DSM 266 / SMG 266 / 2430).